We begin with the raw amino-acid sequence, 437 residues long: 5-hydroxytryptamine receptor 3B (437 aa).

The first 21 residues, 1–21, serve as a signal peptide directing secretion; sequence MILLWSCLLVAVVGILGTATP. The Extracellular portion of the chain corresponds to 22–238; sequence QPGNSSLHRL…VVIRRCPLAY (217 aa). N-linked (GlcNAc...) asparagine glycosylation is found at asparagine 25, asparagine 92, and asparagine 134. Cysteines 151 and 165 form a disulfide. A helical membrane pass occupies residues 239–259; that stretch reads VVSLLIPSIFLMLVDLGSFYL. The Cytoplasmic portion of the chain corresponds to 260–264; it reads PPNCR. Residues 265–282 form a helical membrane-spanning segment; the sequence is ARIVFKTNVLVGYTVFRV. N-linked (GlcNAc...) asparagine glycosylation is present at asparagine 283. The Extracellular segment spans residues 283-292; that stretch reads NMSDEVPRSA. The helical transmembrane segment at 293–313 threads the bilayer; sequence GCTPLIGVFFTVCMALLVLSL. The Cytoplasmic segment spans residues 314-410; that stretch reads SKSILLIKFL…WLAILYRFDQ (97 aa). An HA-stretch; determines single-channel conductance in 5-HT3 receptors region spans residues 377 to 409; sequence FWFQFRSINNSLRTRDQIHQKEVEWLAILYRFD. A helical membrane pass occupies residues 411–431; sequence LLFRIYLAVLGLYTVTLCSLW. Residues 432–437 lie on the Extracellular side of the membrane; that stretch reads ALWSRM.

It belongs to the ligand-gated ion channel (TC 1.A.9) family. 5-hydroxytryptamine receptor (TC 1.A.9.2) subfamily. HTR3B sub-subfamily. As to quaternary structure, forms homopentameric as well as heteropentameric serotonin-activated cation-selective channel complexes with HTR3A. The homomeric complex is not functional. Heteropentameric complexes display properties which resemble that of neuronal serotonin-activated channels in vivo. Post-translationally, N-glycosylation is required for membrane localization.

The protein localises to the postsynaptic cell membrane. Its subcellular location is the cell membrane. It carries out the reaction Na(+)(in) = Na(+)(out). The catalysed reaction is K(+)(in) = K(+)(out). It catalyses the reaction Ca(2+)(in) = Ca(2+)(out). Forms serotonin (5-hydroxytryptamine/5-HT3)-activated cation-selective channel complexes, which when activated cause fast, depolarizing responses in neurons. The polypeptide is 5-hydroxytryptamine receptor 3B (Mus musculus (Mouse)).